A 214-amino-acid chain; its full sequence is Auxin-binding protein ABP20 (214 aa).

A signal peptide spans 1–23 (MPQATMIFPILFTFFLLLSSSNA). Cysteine 29 and cysteine 44 are joined by a disulfide. A Cupin type-1 domain is found at 58 to 204 (SGLGIAGNTS…TTFLDAAQIK (147 aa)). A glycan (N-linked (GlcNAc...) asparagine) is linked at asparagine 65. Mn(2+)-binding residues include histidine 106, histidine 108, glutamate 113, and histidine 152.

The protein belongs to the germin family. Interacts with ABP19.

Its subcellular location is the secreted. The protein resides in the extracellular space. The protein localises to the apoplast. It localises to the cell wall. Its function is as follows. Probable receptor for the plant growth-promoting hormone auxin. The polypeptide is Auxin-binding protein ABP20 (ABP20) (Prunus persica (Peach)).